A 261-amino-acid polypeptide reads, in one-letter code: Hemin import ATP-binding protein HmuV (261 aa).

Positions 7–243 (LRGQNLSLQF…EIIDAVYGYK (237 aa)) constitute an ABC transporter domain. 39–46 (GPNGAGKS) lines the ATP pocket.

Belongs to the ABC transporter superfamily. Heme (hemin) importer (TC 3.A.1.14.5) family. As to quaternary structure, the complex is composed of two ATP-binding proteins (HmuV), two transmembrane proteins (HmuU) and a solute-binding protein (HmuT).

The protein resides in the cell inner membrane. Its function is as follows. Part of the ABC transporter complex HmuTUV involved in hemin import. Responsible for energy coupling to the transport system. This Vibrio vulnificus (strain YJ016) protein is Hemin import ATP-binding protein HmuV.